The primary structure comprises 490 residues: Betaine aldehyde dehydrogenase (490 aa).

K(+) is bound at residue Asp-93. Gly-150 to Trp-152 contributes to the NAD(+) binding site. Lys-162 (charge relay system) is an active-site residue. Lys-176–Glu-179 provides a ligand contact to NAD(+). Residue Val-180 coordinates K(+). Gly-230–Ser-233 is a binding site for NAD(+). Leu-246 serves as a coordination point for K(+). Glu-252 (proton acceptor) is an active-site residue. 3 residues coordinate NAD(+): Gly-254, Cys-286, and Glu-387. Catalysis depends on Cys-286, which acts as the Nucleophile. Cys-286 bears the Cysteine sulfenic acid (-SOH) mark. K(+) is bound by residues Lys-457 and Gly-460. The active-site Charge relay system is Glu-464.

The protein belongs to the aldehyde dehydrogenase family. In terms of assembly, dimer of dimers. K(+) is required as a cofactor.

It carries out the reaction betaine aldehyde + NAD(+) + H2O = glycine betaine + NADH + 2 H(+). The protein operates within amine and polyamine biosynthesis; betaine biosynthesis via choline pathway; betaine from betaine aldehyde: step 1/1. Its function is as follows. Involved in the biosynthesis of the osmoprotectant glycine betaine. Catalyzes the irreversible oxidation of betaine aldehyde to the corresponding acid. The sequence is that of Betaine aldehyde dehydrogenase from Yersinia pseudotuberculosis serotype O:3 (strain YPIII).